The sequence spans 81 residues: Photosystem I iron-sulfur center (81 aa).

4Fe-4S ferredoxin-type domains follow at residues serine 2–tryptophan 31 and isoleucine 39–tyrosine 68. 8 residues coordinate [4Fe-4S] cluster: cysteine 11, cysteine 14, cysteine 17, cysteine 21, cysteine 48, cysteine 51, cysteine 54, and cysteine 58.

In terms of assembly, the cyanobacterial PSI reaction center is composed of one copy each of PsaA,B,C,D,E,F,I,J,K,L,M and X, and forms trimeric complexes. [4Fe-4S] cluster serves as cofactor.

The protein resides in the cellular thylakoid membrane. It carries out the reaction reduced [plastocyanin] + hnu + oxidized [2Fe-2S]-[ferredoxin] = oxidized [plastocyanin] + reduced [2Fe-2S]-[ferredoxin]. Apoprotein for the two 4Fe-4S centers FA and FB of photosystem I (PSI); essential for photochemical activity. FB is the terminal electron acceptor of PSI, donating electrons to ferredoxin. The C-terminus interacts with PsaA/B/D and helps assemble the protein into the PSI complex. Required for binding of PsaD and PsaE to PSI. PSI is a plastocyanin/cytochrome c6-ferredoxin oxidoreductase, converting photonic excitation into a charge separation, which transfers an electron from the donor P700 chlorophyll pair to the spectroscopically characterized acceptors A0, A1, FX, FA and FB in turn. The chain is Photosystem I iron-sulfur center from Prochlorococcus marinus (strain MIT 9303).